Reading from the N-terminus, the 165-residue chain is MNSLENLILVGVIKSCHGIKGHVILKSFTEPATKILERNLVNESGEDIHIKLISQNTKGELICTFNDIATRNEAENLKGYKLFCLRASLPKLEEDEFYIADLNHLPVLNQDHKEIGKIKNILNFGAGDIIEIEFLDQTTELLPFNKEFIPLITKDYVVLNYQREI.

The 72-residue stretch at 94 to 165 (EDEFYIADLN…YVVLNYQREI (72 aa)) folds into the PRC barrel domain.

Belongs to the RimM family. As to quaternary structure, binds ribosomal protein uS19.

It localises to the cytoplasm. Its function is as follows. An accessory protein needed during the final step in the assembly of 30S ribosomal subunit, possibly for assembly of the head region. Essential for efficient processing of 16S rRNA. May be needed both before and after RbfA during the maturation of 16S rRNA. It has affinity for free ribosomal 30S subunits but not for 70S ribosomes. In Rickettsia felis (strain ATCC VR-1525 / URRWXCal2) (Rickettsia azadi), this protein is Ribosome maturation factor RimM.